The following is a 466-amino-acid chain: Muscarinic acetylcholine receptor M2 (466 aa).

Over 1–22 (MNNSTNSSNNSLALTSPYKTFE) the chain is Extracellular. 4 N-linked (GlcNAc...) asparagine glycosylation sites follow: Asn-2, Asn-3, Asn-6, and Asn-9. The chain crosses the membrane as a helical span at residues 23–45 (VVFIVLVAGSLSLVTIIGNILVM). At 46 to 59 (VSIKVNRHLQTVNN) the chain is on the cytoplasmic side. A helical transmembrane segment spans residues 60-80 (YFLFSLACADLIIGVFSMNLY). Topologically, residues 81–97 (TLYTVIGYWPLGPVVCD) are extracellular. A disulfide bond links Cys-96 and Cys-176. The chain crosses the membrane as a helical span at residues 98–119 (LWLALDYVVSNASVMNLLIISF). Positions 120-122 (DRY) match the Important for signaling motif. Residues 120–139 (DRYFCVTKPLTYPVKRTTKM) lie on the Cytoplasmic side of the membrane. The helical transmembrane segment at 140-162 (AGMMIAAAWVLSFILWAPAILFW) threads the bilayer. The Extracellular portion of the chain corresponds to 163–184 (QFIVGVRTVEDGECYIQFFSNA). The chain crosses the membrane as a helical span at residues 185 to 209 (AVTFGTAIAAFYLPVIIMTVLYWHI). The Cytoplasmic segment spans residues 210 to 387 (SRASKSRIKK…PPSREKKVTR (178 aa)). A disordered region spans residues 218 to 355 (KKDKKEPVAN…VVGSSGQNGD (138 aa)). Phosphoserine is present on Ser-232. The segment covering 254 to 270 (GLEHNKIQNGKAPRDPV) has biased composition (basic and acidic residues). Composition is skewed to polar residues over residues 284 to 293 (NDSTSVSAVA), 304 to 313 (DENTVSTSLG), and 334 to 353 (SDSC…SGQN). A helical membrane pass occupies residues 388 to 410 (TILAILLAFIITWAPYNVMVLIN). The Extracellular portion of the chain corresponds to 411-418 (TFCAPCIP). Cys-413 and Cys-416 are joined by a disulfide. Residues 419 to 442 (NTVWTIGYWLCYINSTINPACYAL) traverse the membrane as a helical segment. An Important for signaling motif is present at residues 436–440 (NPACY). Residues 443–466 (CNATFKKTFKHLLMCHYKNIGATR) lie on the Cytoplasmic side of the membrane. Phosphothreonine occurs at positions 446, 450, and 465.

It belongs to the G-protein coupled receptor 1 family. Muscarinic acetylcholine receptor subfamily. CHRM2 sub-subfamily. As to quaternary structure, interacts with ARRB1 and ARRB2. Interacts with RACK1; the interaction regulates CHRM2 internalization. Phosphorylated in response to agonist treatment.

It localises to the cell membrane. It is found in the postsynaptic cell membrane. Functionally, the muscarinic acetylcholine receptor mediates various cellular responses, including inhibition of adenylate cyclase, breakdown of phosphoinositides and modulation of potassium channels through the action of G proteins. Primary transducing effect is adenylate cyclase inhibition. Signaling promotes phospholipase C activity, leading to the release of inositol trisphosphate (IP3); this then triggers calcium ion release into the cytosol. The protein is Muscarinic acetylcholine receptor M2 (CHRM2) of Homo sapiens (Human).